The chain runs to 453 residues: Succinate-semialdehyde dehydrogenase (acetylating) (453 aa).

A188–G193 is a binding site for NADP(+). The active site involves C242.

In terms of assembly, homodimer.

It carries out the reaction succinate semialdehyde + NADP(+) + CoA = succinyl-CoA + NADPH + H(+). In terms of biological role, catalyzes the reduction of succinate semialdehyde to succinyl-CoA. The enzyme is specific for succinate semialdehyde and succinyl-CoA, and only shows low activity with palmitoyl-CoA. There is no activity with NAD(+) as cosubstrate. This chain is Succinate-semialdehyde dehydrogenase (acetylating) (sucD), found in Clostridium kluyveri (strain ATCC 8527 / DSM 555 / NBRC 12016 / NCIMB 10680 / K1).